A 190-amino-acid polypeptide reads, in one-letter code: Transcription termination/antitermination protein NusG (190 aa).

The KOW domain maps to 141 to 165; it reads GDMVRVTSGPFADFSGVVSEVNAPQ.

This sequence belongs to the NusG family.

Participates in transcription elongation, termination and antitermination. This chain is Transcription termination/antitermination protein NusG, found in Deinococcus radiodurans (strain ATCC 13939 / DSM 20539 / JCM 16871 / CCUG 27074 / LMG 4051 / NBRC 15346 / NCIMB 9279 / VKM B-1422 / R1).